The chain runs to 231 residues: S-norcoclaurine synthase 1 (231 aa).

Residue 107–109 participates in dopamine binding; that stretch reads YKE. Residue lysine 121 is the Proton donor of the active site. Residue aspartate 140 participates in (4-hydroxyphenyl)acetaldehyde binding. A helical membrane pass occupies residues 210–230; sequence LLLCLIICLVIAGGMFVAGVP.

It belongs to the BetVI family. Detected in roots, stems, leaves, flower buds and germinating seeds.

Its subcellular location is the membrane. The catalysed reaction is (4-hydroxyphenyl)acetaldehyde + dopamine = (S)-norcoclaurine + H2O. Its pathway is alkaloid biosynthesis; (S)-reticuline biosynthesis. Its activity is regulated as follows. Activity doubles within 5 hours of elicitor treatment and continues to increase for at least 80 hours. In terms of biological role, involved in the biosynthesis of (S)-coclaurine, the common precursor of all benzylisoquinoline alkaloids such as morphine, sanguinarine, codeine or papaverine. Condenses dopamine and 4-hydroxyphenylacetaldehyde. The chain is S-norcoclaurine synthase 1 from Papaver somniferum (Opium poppy).